We begin with the raw amino-acid sequence, 118 residues long: Vesicle-associated membrane protein 1 (118 aa).

Over residues 1-15 the composition is skewed to low complexity; it reads MSAPAQPPAEGTEGA. The tract at residues 1–36 is disordered; sequence MSAPAQPPAEGTEGAAPGGGPPGPPPNMTSNRRLQQ. Topologically, residues 1-96 are cytoplasmic; it reads MSAPAQPPAE…KRKYWWKNCK (96 aa). The v-SNARE coiled-coil homology domain occupies 33–93; the sequence is RLQQTQAQVE…AKLKRKYWWK (61 aa). The residue at position 63 (Ser-63) is a Phosphoserine. A helical; Anchor for type IV membrane protein membrane pass occupies residues 97–116; that stretch reads MMIMLGAICAIIVVVIVIYF. At 117-118 the chain is on the vesicular side; sequence FT.

The protein belongs to the synaptobrevin family. In terms of assembly, interacts with VAPA and VAPB. Post-translationally, (Microbial infection) Targeted and hydrolyzed by C.botulinum neurotoxin type X (BoNT/X) which hydrolyzes the 68-Arg-|-Ala-69 bond and probably inhibits neurotransmitter release. It remains unknown whether BoNT/X is ever produced, or what organisms it targets. Highly expressed in the zona incerta and rostral periolivary region of the brain. Other neuroanatomical regions show negligible expression. Expressed in the retina, expression observed in the outer segments of the photoreceptors, in the outer and inner plexiform layers, and in a subset of ganglion cells.

Its subcellular location is the cytoplasmic vesicle. It localises to the secretory vesicle. The protein resides in the synaptic vesicle membrane. The protein localises to the synapse. It is found in the synaptosome. Its subcellular location is the cytoplasmic vesicle membrane. Its function is as follows. Involved in the targeting and/or fusion of transport vesicles to their target membrane. This is Vesicle-associated membrane protein 1 (Vamp1) from Mus musculus (Mouse).